The primary structure comprises 441 residues: UDP-N-acetylmuramoylalanine--D-glutamate ligase (441 aa).

Residue 129–135 (GTNGKST) participates in ATP binding.

Belongs to the MurCDEF family.

It is found in the cytoplasm. It catalyses the reaction UDP-N-acetyl-alpha-D-muramoyl-L-alanine + D-glutamate + ATP = UDP-N-acetyl-alpha-D-muramoyl-L-alanyl-D-glutamate + ADP + phosphate + H(+). It participates in cell wall biogenesis; peptidoglycan biosynthesis. In terms of biological role, cell wall formation. Catalyzes the addition of glutamate to the nucleotide precursor UDP-N-acetylmuramoyl-L-alanine (UMA). This Zymomonas mobilis subsp. mobilis (strain ATCC 31821 / ZM4 / CP4) protein is UDP-N-acetylmuramoylalanine--D-glutamate ligase.